A 362-amino-acid chain; its full sequence is Acetylajmalan esterase 2 (362 aa).

The first 23 residues, 1–23 (MGFAARPFHIVFSLFVLAGATQA), serve as a signal peptide directing secretion. Ser-38 functions as the Nucleophile in the catalytic mechanism. Residues Asn-100, Asn-118, Asn-151, and Asn-202 are each glycosylated (N-linked (GlcNAc...) asparagine). Catalysis depends on residues Asp-335 and His-338.

The protein belongs to the 'GDSL' lipolytic enzyme family. In terms of tissue distribution, confined to roots.

It catalyses the reaction 17-O-acetylnorajmaline + H2O = norajmaline + acetate + H(+). The catalysed reaction is 17-O-acetylajmaline + H2O = ajmaline + acetate + H(+). Its pathway is alkaloid biosynthesis; ajmaline biosynthesis. Acetylesterase involved in the biosynthesis of ajmaline-type monoterpenoid indole alkaloids (MIAs) natural products, important plant-derived pharmaceuticals used in the therapy of heart disorders. Deacetylates 17-O-acetylnorajmaline to produce norajmaline. May also catalyze the conversion of 17-O-acetylajmaline to ajmaline. In Rauvolfia serpentina (Serpentine wood), this protein is Acetylajmalan esterase 2.